Consider the following 776-residue polypeptide: Methionine--tRNA ligase (776 aa).

The short motif at 10-20 (PYSNGPIHLGH) is the 'HIGH' region element. The Zn(2+) site is built by Cys-143, Cys-146, Cys-156, and Cys-159. Positions 375–379 (KFSKS) match the 'KMSKS' region motif. Lys-378 contributes to the ATP binding site. Positions 676–776 (DFAKLDMRVG…KPISLGSKVR (101 aa)) constitute a tRNA-binding domain.

It belongs to the class-I aminoacyl-tRNA synthetase family. MetG type 1 subfamily. As to quaternary structure, homodimer. The cofactor is Zn(2+).

It localises to the cytoplasm. It catalyses the reaction tRNA(Met) + L-methionine + ATP = L-methionyl-tRNA(Met) + AMP + diphosphate. Is required not only for elongation of protein synthesis but also for the initiation of all mRNA translation through initiator tRNA(fMet) aminoacylation. In Nanoarchaeum equitans (strain Kin4-M), this protein is Methionine--tRNA ligase (metG).